The primary structure comprises 102 residues: MYAIIETGGKQIKVEAGQAIYIEKLDVEAGETVTFDKVLFVGGENVKVGSPVVEGATVTAKVEKQGRAKKIIVFKYKAKKNNRKKQGHRQPYTKLVVEAINA.

It belongs to the bacterial ribosomal protein bL21 family. In terms of assembly, part of the 50S ribosomal subunit. Contacts protein L20.

In terms of biological role, this protein binds to 23S rRNA in the presence of protein L20. This chain is Large ribosomal subunit protein bL21, found in Bacillus anthracis (strain A0248).